Reading from the N-terminus, the 647-residue chain is DNA mismatch repair protein MutL (647 aa).

It belongs to the DNA mismatch repair MutL/HexB family.

Its function is as follows. This protein is involved in the repair of mismatches in DNA. It is required for dam-dependent methyl-directed DNA mismatch repair. May act as a 'molecular matchmaker', a protein that promotes the formation of a stable complex between two or more DNA-binding proteins in an ATP-dependent manner without itself being part of a final effector complex. The chain is DNA mismatch repair protein MutL from Koribacter versatilis (strain Ellin345).